A 248-amino-acid polypeptide reads, in one-letter code: Probable capsular polysaccharide biosynthesis protein YwqC (248 aa).

2 consecutive transmembrane segments (helical) span residues 18-38 (ILLIMIVTAAATAAGGLISFF) and 174-194 (LLNIAIAFAAGLAGSIGLAFL).

The protein belongs to the CpsC/CapA family. Not phosphorylated in vitro by YwqD.

The protein resides in the cell membrane. It functions in the pathway capsule biogenesis; capsule polysaccharide biosynthesis. Functionally, required for YwqD kinase activity. May bring YwqD and its substrates into contact. Probably involved in the regulation of capsular polysaccharide biosynthesis. This Bacillus subtilis (strain 168) protein is Probable capsular polysaccharide biosynthesis protein YwqC (ywqC).